The chain runs to 188 residues: Fructose-1-phosphate phosphatase YqaB (188 aa).

Asp11 functions as the Nucleophile in the catalytic mechanism. Mg(2+) is bound by residues Asp11, Asp13, and Asp167. Substrate is bound at residue 11–13; that stretch reads DMD.

It belongs to the HAD-like hydrolase superfamily. CbbY/CbbZ/Gph/YieH family. Requires Mg(2+) as cofactor. Mn(2+) serves as cofactor. It depends on Co(2+) as a cofactor. Zn(2+) is required as a cofactor.

Catalyzes strongly the dephosphorylation of fructose-1-phosphate (Fru1P) and slightly the dephosphorylation of 6-phosphogluconate (6P-Glu). It has low beta-phosphoglucomutase activity. The chain is Fructose-1-phosphate phosphatase YqaB (yqaB) from Escherichia coli (strain K12).